The sequence spans 503 residues: Medium/long-chain-fatty-acid--CoA ligase FadD17 (503 aa).

The protein belongs to the ATP-dependent AMP-binding enzyme family.

It catalyses the reaction a medium-chain fatty acid + ATP + CoA = a medium-chain fatty acyl-CoA + AMP + diphosphate. The catalysed reaction is a long-chain fatty acid + ATP + CoA = a long-chain fatty acyl-CoA + AMP + diphosphate. Its pathway is lipid metabolism; fatty acid biosynthesis. In terms of biological role, catalyzes the activation of medium/long-chain fatty acids as acyl-coenzyme A (acyl-CoA), which are then transferred to the multifunctional polyketide synthase (PKS) type III for further chain extension. In Mycobacterium marinum (strain ATCC BAA-535 / M), this protein is Medium/long-chain-fatty-acid--CoA ligase FadD17 (fadD17).